A 245-amino-acid polypeptide reads, in one-letter code: Eukaryotic translation initiation factor 6 (245 aa).

The protein belongs to the eIF-6 family. In terms of assembly, monomer. Associates with the 60S ribosomal subunit.

Its subcellular location is the cytoplasm. It localises to the nucleus. It is found in the nucleolus. In terms of biological role, binds to the 60S ribosomal subunit and prevents its association with the 40S ribosomal subunit to form the 80S initiation complex in the cytoplasm. May also be involved in ribosome biogenesis. This chain is Eukaryotic translation initiation factor 6 (eif6), found in Xenopus laevis (African clawed frog).